The chain runs to 266 residues: Phosphatidylglycerol--prolipoprotein diacylglyceryl transferase (266 aa).

Transmembrane regions (helical) follow at residues 21–41, 60–80, 95–115, 124–144, 176–196, 203–223, and 236–256; these read LAIR…MWLA, LLFA…VLFY, VWTG…AMLW, FFSV…MGRM, SQLY…NIFI, GAVS…IEYF, and WISM…LLML. R143 serves as a coordination point for a 1,2-diacyl-sn-glycero-3-phospho-(1'-sn-glycerol).

It belongs to the Lgt family.

Its subcellular location is the cell inner membrane. The catalysed reaction is L-cysteinyl-[prolipoprotein] + a 1,2-diacyl-sn-glycero-3-phospho-(1'-sn-glycerol) = an S-1,2-diacyl-sn-glyceryl-L-cysteinyl-[prolipoprotein] + sn-glycerol 1-phosphate + H(+). Its pathway is protein modification; lipoprotein biosynthesis (diacylglyceryl transfer). In terms of biological role, catalyzes the transfer of the diacylglyceryl group from phosphatidylglycerol to the sulfhydryl group of the N-terminal cysteine of a prolipoprotein, the first step in the formation of mature lipoproteins. The polypeptide is Phosphatidylglycerol--prolipoprotein diacylglyceryl transferase (Photobacterium profundum (strain SS9)).